A 110-amino-acid polypeptide reads, in one-letter code: Phosphoribosyl-ATP pyrophosphatase (110 aa).

This sequence belongs to the PRA-PH family.

The protein resides in the cytoplasm. It carries out the reaction 1-(5-phospho-beta-D-ribosyl)-ATP + H2O = 1-(5-phospho-beta-D-ribosyl)-5'-AMP + diphosphate + H(+). Its pathway is amino-acid biosynthesis; L-histidine biosynthesis; L-histidine from 5-phospho-alpha-D-ribose 1-diphosphate: step 2/9. The polypeptide is Phosphoribosyl-ATP pyrophosphatase (Pseudomonas fluorescens (strain ATCC BAA-477 / NRRL B-23932 / Pf-5)).